The chain runs to 271 residues: Aquaporin-2 (271 aa).

Residues 1-11 (MWELRSIAFSR) are Cytoplasmic-facing. A helical membrane pass occupies residues 12-32 (AVLAEFLATLLFVFFGLGSAL). Residues 33–40 (NWPQALPS) are Extracellular-facing. Residues 41–59 (VLQIAMAFGLAIGTLVQAL) traverse the membrane as a helical segment. Topologically, residues 60 to 64 (GHVSG) are cytoplasmic. An intramembrane region (discontinuously helical) is located at residues 65-74 (AHINPAVTVA). An NPA 1 motif is present at residues 68–70 (NPA). Over 75–85 (CLVGCHVSFLR) the chain is Cytoplasmic. Residues 86–107 (AVFYVAAQLLGAVAGAALLHEI) traverse the membrane as a helical segment. Residues 108–127 (TPPAIRGDLAVNALNNNSTA) are Extracellular-facing. 2 N-linked (GlcNAc...) asparagine glycosylation sites follow: N123 and N124. Residues 128–148 (GQAVTVELFLTLQLVLCIFPS) traverse the membrane as a helical segment. Residues 149 to 156 (TDKRRGKQ) are Cytoplasmic-facing. Residues 157-176 (LGHPALSIGFSVALGHLLGI) form a helical membrane-spanning segment. Topologically, residues 177-180 (HYTG) are extracellular. The discontinuously helical intramembrane region spans 181–193 (CSMNPARSLAPAI). An NPA 2 motif is present at residues 184 to 186 (NPA). Over 194-201 (VTGKFDDH) the chain is Extracellular. A helical transmembrane segment spans residues 202–222 (WVFWIGPLVGAIVASLLYNYV). At 223–271 (LFPPAKSLSERLAVLKGLEPDTDWEEREVRRRQSVELHSPQSLPRGTKA) the chain is on the cytoplasmic side. Positions 249-271 (REVRRRQSVELHSPQSLPRGTKA) are disordered. The residue at position 256 (S256) is a Phosphoserine. Positions 261–271 (SPQSLPRGTKA) are enriched in polar residues.

It belongs to the MIP/aquaporin (TC 1.A.8) family. As to quaternary structure, homotetramer. In terms of processing, ser-256 phosphorylation is necessary and sufficient for expression at the apical membrane. Endocytosis is not phosphorylation-dependent. Post-translationally, N-glycosylated. As to expression, expressed in renal collecting tubules.

Its subcellular location is the apical cell membrane. The protein resides in the basolateral cell membrane. It is found in the cell membrane. The protein localises to the cytoplasmic vesicle membrane. It localises to the golgi apparatus. Its subcellular location is the trans-Golgi network membrane. It catalyses the reaction H2O(in) = H2O(out). The enzyme catalyses glycerol(in) = glycerol(out). Forms a water-specific channel that provides the plasma membranes of renal collecting duct with high permeability to water, thereby permitting water to move in the direction of an osmotic gradient. Could also be permeable to glycerol. This is Aquaporin-2 from Ovis aries (Sheep).